Reading from the N-terminus, the 144-residue chain is Flagellar assembly factor FliW (144 aa).

Belongs to the FliW family. Interacts with translational regulator CsrA and flagellin(s).

It is found in the cytoplasm. Functionally, acts as an anti-CsrA protein, binds CsrA and prevents it from repressing translation of its target genes, one of which is flagellin. Binds to flagellin and participates in the assembly of the flagellum. In Geobacillus kaustophilus (strain HTA426), this protein is Flagellar assembly factor FliW.